Reading from the N-terminus, the 278-residue chain is Cation-dependent mannose-6-phosphate receptor (278 aa).

An N-terminal signal peptide occupies residues 1–21 (MFPFSGCWRTELLLLLLLAVA). At 22 to 186 (VRESWQIEEK…SLACSPEVSH (165 aa)) the chain is on the lumenal side. One can recognise an MRH domain in the interval 31 to 182 (KSCDLVGEKD…EMDSSLACSP (152 aa)). A disulfide bond links cysteine 33 and cysteine 79. N-linked (GlcNAc...) asparagine glycosylation is found at asparagine 58, asparagine 84, asparagine 95, asparagine 108, and asparagine 114. Disulfide bonds link cysteine 133–cysteine 168 and cysteine 146–cysteine 180. The chain crosses the membrane as a helical span at residues 187-211 (LSVGSILLVIFASLVAVYIIGGFLY). At 212 to 278 (QRLVVGAKGM…EERDDHLLPM (67 aa)) the chain is on the cytoplasmic side. Positions 257–278 (RGVGDDQLGEESEERDDHLLPM) are disordered. The residue at position 268 (serine 268) is a Phosphoserine.

Homodimer. Binds GGA1, GGA2 and GGA3.

It localises to the lysosome membrane. Functionally, transport of phosphorylated lysosomal enzymes from the Golgi complex and the cell surface to lysosomes. Lysosomal enzymes bearing phosphomannosyl residues bind specifically to mannose-6-phosphate receptors in the Golgi apparatus and the resulting receptor-ligand complex is transported to an acidic prelyosomal compartment where the low pH mediates the dissociation of the complex. The chain is Cation-dependent mannose-6-phosphate receptor (M6pr) from Mus musculus (Mouse).